The following is a 142-amino-acid chain: Transcriptional regulator MraZ (142 aa).

SpoVT-AbrB domains follow at residues 5-51 (ASSL…PRNE) and 77-120 (AMDV…DAAT).

The protein belongs to the MraZ family. As to quaternary structure, forms oligomers.

The protein localises to the cytoplasm. It is found in the nucleoid. The polypeptide is Transcriptional regulator MraZ (Polaromonas sp. (strain JS666 / ATCC BAA-500)).